We begin with the raw amino-acid sequence, 203 residues long: Guanylate kinase (203 aa).

A Guanylate kinase-like domain is found at 3 to 181 (GTLYVVSAPS…TLADLQAIFT (179 aa)). Residue 10 to 17 (APSGAGKT) coordinates ATP.

Belongs to the guanylate kinase family.

The protein localises to the cytoplasm. The catalysed reaction is GMP + ATP = GDP + ADP. Its function is as follows. Essential for recycling GMP and indirectly, cGMP. The sequence is that of Guanylate kinase from Alkalilimnicola ehrlichii (strain ATCC BAA-1101 / DSM 17681 / MLHE-1).